The following is a 129-amino-acid chain: MARGLAVFFLLAGACLALAEDVVDKGVAKARVESCSGUQLNRYPGAKQFIQEDLPLFHNTKFQHIGGAAPELLLLNKQDQELERFDLKKLSREEINELMIKKGFYKKSSKDEQVPEEYQEGPYMEKEEL.

The first 19 residues, 1–19 (MARGLAVFFLLAGACLALA), serve as a signal peptide directing secretion. Residues Cys35 and Sec38 each act as nucleophile in the active site. A non-standard amino acid (selenocysteine) is located at residue Sec38. Residues 107-129 (KSSKDEQVPEEYQEGPYMEKEEL) are disordered. Positions 126–129 (KEEL) match the Prevents secretion from ER motif.

The protein belongs to the selenoprotein M/F family. As to expression, high expression levels observed in hepatopancreas, testis, ovaries and intestine. Also expressed in heart, stomach, gills, cranial ganglia, muscle and hematocytes.

Its subcellular location is the endoplasmic reticulum. In terms of biological role, may function as a thiol-disulfide oxidoreductase that participates in disulfide bond formation. Involved in the regulation of reproduction during the period of rapid gonadal development. The chain is Selenoprotein M from Eriocheir sinensis (Chinese mitten crab).